We begin with the raw amino-acid sequence, 607 residues long: Bifunctional endo-1,4-beta-xylanase A (607 aa).

The first 18 residues, 1-18, serve as a signal peptide directing secretion; sequence MRTIKFFFAVAIATVAKA. One can recognise a GH11 1 domain in the interval 35–242; the sequence is NGQTQHKGVA…SSGIADVTKL (208 aa). The active-site Nucleophile is the Glu-141. The active-site Proton donor is the Glu-223. A compositionally biased stretch (polar residues) spans 248 to 272; sequence QKGSNPAPTSTGTVPSSSAGGSTAN. Residues 248–284 are disordered; the sequence is QKGSNPAPTSTGTVPSSSAGGSTANGKKFTVGNGQNQ. One can recognise a GH11 2 domain in the interval 280–487; the sequence is NGQNQHKGVN…SSGVADVTLL (208 aa). Catalysis depends on Glu-386, which acts as the Nucleophile. Catalysis depends on Glu-474, which acts as the Proton donor. The tract at residues 493–514 is disordered; that stretch reads PKGSSPATSAAPRTTTRTTTRT. The segment covering 496 to 514 has biased composition (low complexity); the sequence is SSPATSAAPRTTTRTTTRT. 2 CBM10 domains span residues 523–563 and 566–606; these read KCSA…CGCG and QCSS…CGCG.

It belongs to the glycosyl hydrolase 11 (cellulase G) family.

The catalysed reaction is Endohydrolysis of (1-&gt;4)-beta-D-xylosidic linkages in xylans.. Its pathway is glycan degradation; xylan degradation. Functionally, hydrolyzes xylans into xylobiose and xylose. The sequence is that of Bifunctional endo-1,4-beta-xylanase A (XYNA) from Neocallimastix patriciarum (Rumen fungus).